The sequence spans 422 residues: Putative polyketide beta-ketoacyl synthase 1 (422 aa).

One can recognise a Ketosynthase family 3 (KS3) domain in the interval 2–416; sequence TRRVAVTGIG…GFQSAVLLTG (415 aa). Residues cysteine 169, histidine 309, and histidine 346 each act as for beta-ketoacyl synthase activity in the active site.

This sequence belongs to the thiolase-like superfamily. Beta-ketoacyl-ACP synthases family.

The protein operates within antibiotic biosynthesis; curamycin biosynthesis. The protein is Putative polyketide beta-ketoacyl synthase 1 (curA) of Streptomyces cyaneus (Streptomyces curacoi).